We begin with the raw amino-acid sequence, 1103 residues long: A disintegrin and metalloproteinase with thrombospondin motifs 10 (1103 aa).

The first 25 residues, 1–25, serve as a signal peptide directing secretion; the sequence is MAPACQILRWALALGLGLMFEVTHA. A propeptide spanning residues 26–233 is cleaved from the precursor; it reads FRSQDEFLSS…TERGQPGLKR (208 aa). N-linked (GlcNAc...) asparagine glycosylation is found at N90, N222, and N323. The interval 213-233 is disordered; that stretch reads KPPPARPLGNETERGQPGLKR. In terms of domain architecture, Peptidase M12B spans 239-457; the sequence is RYVETLVVAD…GLGLCLNNRP (219 aa). Disulfide bonds link C315/C376, C351/C358, C370/C452, C409/C436, C479/C501, C490/C508, C496/C531, C521/C536, C559/C596, C563/C601, and C574/C586. Residue H392 coordinates Zn(2+). E393 is a catalytic residue. Zn(2+) contacts are provided by H396 and H402. One can recognise a Disintegrin domain in the interval 460–546; the sequence is QDFVYPTVAP…VPFGSRPEGV (87 aa). The TSP type-1 1 domain maps to 547-602; sequence DGAWGPWTPWGDCSRTCGGGVSSSSRHCDSPRPTIGGKYCLGERRRHRSCNTDDCP. The tract at residues 706-828 is spacer; it reads ETIEGVFSPA…IARDSLPPYS (123 aa). 2 N-linked (GlcNAc...) asparagine glycosylation sites follow: N740 and N795. TSP type-1 domains are found at residues 825-883, 884-945, 947-1001, and 1003-1058; these read PPYS…NTEP, CPPD…PTCP, EWAA…NLRR, and PPAR…AKCD. An N-linked (GlcNAc...) asparagine glycan is attached at N892. Residues 1065–1103 enclose the PLAC domain; sequence GPEECKDVNKVAYCPLVLKFQFCSRAYFRQMCCKTCHGH.

In terms of assembly, interacts with FBN1; this interaction promotes microfibrils assembly. Zn(2+) serves as cofactor. Post-translationally, glycosylated. Can be O-fucosylated by POFUT2 on a serine or a threonine residue found within the consensus sequence C1-X(2)-(S/T)-C2-G of the TSP type-1 repeat domains where C1 and C2 are the first and second cysteine residue of the repeat, respectively. Fucosylated repeats can then be further glycosylated by the addition of a beta-1,3-glucose residue by the glucosyltransferase, B3GALTL. Fucosylation mediates the efficient secretion of ADAMTS family members. Can also be C-glycosylated with one or two mannose molecules on tryptophan residues within the consensus sequence W-X-X-W of the TPRs, and N-glycosylated. These other glycosylations can also facilitate secretion. As to expression, widely expressed in adult tissues.

It localises to the secreted. Its subcellular location is the extracellular space. The protein resides in the extracellular matrix. Its function is as follows. Metalloprotease that participate in microfibrils assembly. Microfibrils are extracellular matrix components occurring independently or along with elastin in the formation of elastic tissues. The sequence is that of A disintegrin and metalloproteinase with thrombospondin motifs 10 (ADAMTS10) from Homo sapiens (Human).